Reading from the N-terminus, the 244-residue chain is Type III pantothenate kinase (244 aa).

Residue 12–19 (VVGNTHVR) coordinates ATP. Substrate contacts are provided by residues tyrosine 79 and 83 to 86 (GLDR). Aspartate 85 serves as the catalytic Proton acceptor. K(+) is bound at residue aspartate 105. An ATP-binding site is contributed by threonine 108. Threonine 163 is a substrate binding site.

The protein belongs to the type III pantothenate kinase family. Homodimer. It depends on NH4(+) as a cofactor. K(+) serves as cofactor.

The protein localises to the cytoplasm. It carries out the reaction (R)-pantothenate + ATP = (R)-4'-phosphopantothenate + ADP + H(+). It participates in cofactor biosynthesis; coenzyme A biosynthesis; CoA from (R)-pantothenate: step 1/5. Catalyzes the phosphorylation of pantothenate (Pan), the first step in CoA biosynthesis. The protein is Type III pantothenate kinase of Synechococcus sp. (strain JA-3-3Ab) (Cyanobacteria bacterium Yellowstone A-Prime).